We begin with the raw amino-acid sequence, 173 residues long: C-phycocyanin-2 beta subunit (173 aa).

Asn-73 is modified (N4-methylasparagine). Cys-83 and Cys-154 together coordinate (2R,3E)-phycocyanobilin.

It belongs to the phycobiliprotein family. Heterodimer of an alpha and a beta subunit, which further assembles into trimers and the trimers into hexamers. In terms of processing, contains two covalently linked bilin chromophores.

It localises to the cellular thylakoid membrane. Functionally, light-harvesting photosynthetic bile pigment-protein from the phycobiliprotein complex (phycobilisome, PBS). Phycocyanin is the major phycobiliprotein in the PBS rod. The chain is C-phycocyanin-2 beta subunit (cpcB2) from Synechococcus sp. (strain ATCC 27144 / PCC 6301 / SAUG 1402/1) (Anacystis nidulans).